Reading from the N-terminus, the 493-residue chain is Cytoplasmic tRNA 2-thiolation protein 2 (493 aa).

Serine 489 is subject to Phosphoserine.

It belongs to the CTU2/NCS2 family. In terms of assembly, interacts with NCS6 and URM1. May act by forming a heterodimer with NCS6.

Its subcellular location is the cytoplasm. The protein operates within tRNA modification; 5-methoxycarbonylmethyl-2-thiouridine-tRNA biosynthesis. In terms of biological role, plays a central role in 2-thiolation of mcm(5)S(2)U at tRNA wobble positions of tRNA(Lys), tRNA(Glu) and tRNA(Gln). May act by forming a heterodimer with NCS6 that ligates sulfur from thiocarboxylated URM1 onto the uridine of tRNAs at wobble position. Prior mcm(5) tRNA modification by the elongator complex is required for 2-thiolation. May also be involved in protein urmylation. The polypeptide is Cytoplasmic tRNA 2-thiolation protein 2 (Saccharomyces cerevisiae (strain YJM789) (Baker's yeast)).